The chain runs to 304 residues: 15-cis-phytoene synthase (304 aa).

It belongs to the phytoene/squalene synthase family. It depends on ATP as a cofactor. Requires Mn(2+) as cofactor. Mg(2+) is required as a cofactor.

It carries out the reaction 2 (2E,6E,10E)-geranylgeranyl diphosphate = 15-cis-phytoene + 2 diphosphate. Its pathway is carotenoid biosynthesis; astaxanthin biosynthesis. It participates in carotenoid biosynthesis; phytoene biosynthesis. In terms of biological role, involved in the biosynthesis of carotenoids for the production of astaxanthin. Catalyzes the condensation of two molecules of geranylgeranyl diphosphate (GGPP) to give prephytoene diphosphate (PPPP) and the subsequent rearrangement of the cyclopropylcarbinyl intermediate to yield 15-cis phytoene. The polypeptide is 15-cis-phytoene synthase (crtB) (Paracoccus sp. (strain N81106 / MBIC 01143) (Agrobacterium aurantiacum)).